Consider the following 156-residue polypeptide: uncharacterized protein (156 aa).

This is an uncharacterized protein from Methanocaldococcus jannaschii (strain ATCC 43067 / DSM 2661 / JAL-1 / JCM 10045 / NBRC 100440) (Methanococcus jannaschii).